Here is a 547-residue protein sequence, read N- to C-terminus: Methionine--tRNA ligase (547 aa).

A 'HIGH' region motif is present at residues 15-25 (PYANGSLHLGH). 4 residues coordinate Zn(2+): Cys-146, Cys-149, Cys-159, and Cys-162. A 'KMSKS' region motif is present at residues 332–336 (KMSKS). Lys-335 contacts ATP.

It belongs to the class-I aminoacyl-tRNA synthetase family. MetG type 1 subfamily. Monomer. Zn(2+) serves as cofactor.

It localises to the cytoplasm. The enzyme catalyses tRNA(Met) + L-methionine + ATP = L-methionyl-tRNA(Met) + AMP + diphosphate. Functionally, is required not only for elongation of protein synthesis but also for the initiation of all mRNA translation through initiator tRNA(fMet) aminoacylation. This is Methionine--tRNA ligase from Baumannia cicadellinicola subsp. Homalodisca coagulata.